The sequence spans 432 residues: Phytase AppA (432 aa).

A signal peptide spans 1 to 22; the sequence is MKAILIPFLSLLIPLTPQSAFA. Arg-38 serves as a coordination point for 1D-myo-inositol hexakisphosphate. Catalysis depends on His-39, which acts as the Nucleophile. Residues 42–46 and Arg-114 contribute to the 1D-myo-inositol hexakisphosphate site; that span reads RAPTK. Disulfide bonds link Cys-99/Cys-130, Cys-155/Cys-430, Cys-200/Cys-210, and Cys-404/Cys-413. Residues Arg-289 and 325–327 each bind 1D-myo-inositol hexakisphosphate; that span reads HDT. Asp-326 functions as the Proton donor in the catalytic mechanism.

This sequence belongs to the histidine acid phosphatase family. In terms of assembly, monomer.

The protein resides in the periplasm. It catalyses the reaction 1D-myo-inositol hexakisphosphate + H2O = 1D-myo-inositol 1,2,3,4,5-pentakisphosphate + phosphate. It carries out the reaction 1D-myo-inositol 1,2,3,4,5-pentakisphosphate + H2O = 1D-myo-inositol 2,3,4,5-tetrakisphosphate + phosphate. The catalysed reaction is 1D-myo-inositol 2,3,4,5-tetrakisphosphate + H2O = 1D-myo-inositol 2,4,5-triphosphate + phosphate. The enzyme catalyses 1D-myo-inositol 2,4,5-triphosphate + H2O = 1D-myo-inositol 2,5-bisphosphate + phosphate. It catalyses the reaction 1D-myo-inositol 2,5-bisphosphate + H2O = 1D-myo-inositol 2-phosphate + phosphate. It carries out the reaction GTP + H2O = GDP + phosphate + H(+). With respect to regulation, contains three consecutive and one non-consecutive disulfide bonds and shows a strong dependence on DsbC for its full activity. Competitively inhibited by tartaric acid and by sodium fluorid. Its function is as follows. Catalyzes the hydrolysis of phytate (or myo-inositol hexakisphosphate, an indigestible organic form of phosphorus that is found in many plant tissues) to myo-inositol and inorganic phosphate. Dephosphorylates phytate in a stereospecific way by sequential removal of phosphate groups to produce myo-inositol 2-monophosphate. Also shows phosphoanhydride phosphatase activity and hydrolyzes the distal phosphoryl residues of GTP, the 5'-beta-phosphoryl residue of the regulatory nucleotide ppGpp and tripolyphosphates. Does not split most phosphomonoesters with the exception of the synthetic substrate p-nitrophenyl phosphate (pNPP), 2,3-bisphosphoglycerate and fructose 1,6-bisphosphate. The sequence is that of Phytase AppA from Escherichia coli (strain K12).